A 78-amino-acid polypeptide reads, in one-letter code: Large ribosomal subunit protein bL28 (78 aa).

Residues 1–23 are disordered; it reads MSRVCQVSGKRVQTGNNVSHANN. The span at 11-22 shows a compositional bias: polar residues; the sequence is RVQTGNNVSHAN.

It belongs to the bacterial ribosomal protein bL28 family.

The chain is Large ribosomal subunit protein bL28 from Stenotrophomonas maltophilia (strain R551-3).